Here is a 520-residue protein sequence, read N- to C-terminus: O-methyltransferase cicE (520 aa).

S-adenosyl-L-methionine contacts are provided by residues 300–301, aspartate 323, 355–356, and arginine 371; these read GG and NF.

Belongs to the class I-like SAM-binding methyltransferase superfamily. Cation-independent O-methyltransferase family.

Its pathway is phytotoxin biosynthesis. Functionally, O-methyltransferase; part of the gene cluster that mediates the biosynthesis of cichorine, a phytotoxin active against knapweed, corn, and soybeans. The first step in the pathway is performed by the non-reducing polyketide synthase pkbA that condenses one acetyl-CoA starter unit with 3 malonyl-CoA units. PkbA also catalyzes one methylation step to produce 3-methylorsellinate. The nonribosomal peptide synthase-like protein cicB, the cytochrome P450 monooxygenase cicH and the O-methyltransferase cicE are involved in the conversion of 3-methylorsellinate into nidulol. CicB converts 3-methylorsellinate to a yet unidentified intermediate, cicH may play a ring-closing role for cichorine and cicE is plausibly responsible for the methylation of one of the phenol groups. The oxidoreductase cicC acts downstream with still unidentified enzymes to further convert nidulol into cichorine. The protein is O-methyltransferase cicE of Emericella nidulans (strain FGSC A4 / ATCC 38163 / CBS 112.46 / NRRL 194 / M139) (Aspergillus nidulans).